The chain runs to 205 residues: Endoribonuclease YbeY (205 aa).

3 residues coordinate Zn(2+): His-124, His-128, and His-134. The disordered stretch occupies residues 162-205 (GTAPVAPGGEAQVPNEALETSGKRQDHSLGEILPGGMSRRLAGS).

It belongs to the endoribonuclease YbeY family. The cofactor is Zn(2+).

The protein resides in the cytoplasm. Its function is as follows. Single strand-specific metallo-endoribonuclease involved in late-stage 70S ribosome quality control and in maturation of the 3' terminus of the 16S rRNA. The polypeptide is Endoribonuclease YbeY (Beijerinckia indica subsp. indica (strain ATCC 9039 / DSM 1715 / NCIMB 8712)).